A 420-amino-acid chain; its full sequence is Glucose-1-phosphate adenylyltransferase (420 aa).

Residues Tyr107, Gly173, Glu188–Lys189, and Ser206 each bind alpha-D-glucose 1-phosphate.

Belongs to the bacterial/plant glucose-1-phosphate adenylyltransferase family. Homotetramer.

The catalysed reaction is alpha-D-glucose 1-phosphate + ATP + H(+) = ADP-alpha-D-glucose + diphosphate. It functions in the pathway glycan biosynthesis; glycogen biosynthesis. In terms of biological role, involved in the biosynthesis of ADP-glucose, a building block required for the elongation reactions to produce glycogen. Catalyzes the reaction between ATP and alpha-D-glucose 1-phosphate (G1P) to produce pyrophosphate and ADP-Glc. The chain is Glucose-1-phosphate adenylyltransferase from Shewanella sp. (strain ANA-3).